Reading from the N-terminus, the 377-residue chain is 3-dehydroquinate synthase (377 aa).

NAD(+) contacts are provided by residues 115–119 (GVIGD), 139–140 (TS), Lys152, and Lys162. Residues Glu195, His257, and His276 each coordinate Zn(2+).

The protein belongs to the sugar phosphate cyclases superfamily. Dehydroquinate synthase family. Requires Co(2+) as cofactor. Zn(2+) serves as cofactor. It depends on NAD(+) as a cofactor.

The protein localises to the cytoplasm. The enzyme catalyses 7-phospho-2-dehydro-3-deoxy-D-arabino-heptonate = 3-dehydroquinate + phosphate. It functions in the pathway metabolic intermediate biosynthesis; chorismate biosynthesis; chorismate from D-erythrose 4-phosphate and phosphoenolpyruvate: step 2/7. Its function is as follows. Catalyzes the conversion of 3-deoxy-D-arabino-heptulosonate 7-phosphate (DAHP) to dehydroquinate (DHQ). This Rhizobium etli (strain ATCC 51251 / DSM 11541 / JCM 21823 / NBRC 15573 / CFN 42) protein is 3-dehydroquinate synthase.